The chain runs to 528 residues: Proteinaceous RNase P 2 (528 aa).

Positions 1 to 16 are enriched in basic and acidic residues; that stretch reads MAASDQHRSRRHDESS. The tract at residues 1–28 is disordered; it reads MAASDQHRSRRHDESSSRPNKKKKVSRN. PPR repeat units lie at residues 29–64, 72–107, 108–142, and 145–179; these read PETN…EVRL, LLYL…GISP, NEAS…GGVS, and RLRT…GIAL. The 237-residue stretch at 275–511 folds into the PRORP domain; sequence VSSTGRCLSC…NEESSRTWMC (237 aa). Residues Cys281 and Cys284 each coordinate Zn(2+). Mg(2+) contacts are provided by Asp343, Asp421, Asp422, and Asp440. Zn(2+)-binding residues include His494 and Cys511.

The protein belongs to the PPR family. P subfamily. Monomer; forms dimers in crystallo but monomers in solution. The cofactor is Mg(2+).

It localises to the nucleus. It carries out the reaction Endonucleolytic cleavage of RNA, removing 5'-extranucleotides from tRNA precursor.. Functionally, endonuclease RNase P responsible for the 5' maturation of tRNA precursors. Preferentially binds precursor tRNAs containing short 5' leaders and 3' trailers. Also involved in the maturation of mRNA and small nucleolar RNA (snoRNA). This chain is Proteinaceous RNase P 2 (PRORP2), found in Arabidopsis thaliana (Mouse-ear cress).